Here is a 324-residue protein sequence, read N- to C-terminus: Phospho-N-acetylmuramoyl-pentapeptide-transferase (324 aa).

10 consecutive transmembrane segments (helical) span residues 5–25, 52–72, 77–97, 117–137, 147–167, 176–196, 203–223, 227–247, 250–270, and 302–322; these read VILF…PIFI, PTMG…VMTM, VSMN…LGFL, LIGQ…QGMP, LSFD…VGGS, LDGL…ILAW, VAIF…FNAH, VFMG…IAIL, LEIL…SVIL, and VVVT…YIEV.

This sequence belongs to the glycosyltransferase 4 family. MraY subfamily. Requires Mg(2+) as cofactor.

It is found in the cell membrane. It catalyses the reaction UDP-N-acetyl-alpha-D-muramoyl-L-alanyl-gamma-D-glutamyl-meso-2,6-diaminopimeloyl-D-alanyl-D-alanine + di-trans,octa-cis-undecaprenyl phosphate = di-trans,octa-cis-undecaprenyl diphospho-N-acetyl-alpha-D-muramoyl-L-alanyl-D-glutamyl-meso-2,6-diaminopimeloyl-D-alanyl-D-alanine + UMP. The protein operates within cell wall biogenesis; peptidoglycan biosynthesis. Functionally, catalyzes the initial step of the lipid cycle reactions in the biosynthesis of the cell wall peptidoglycan: transfers peptidoglycan precursor phospho-MurNAc-pentapeptide from UDP-MurNAc-pentapeptide onto the lipid carrier undecaprenyl phosphate, yielding undecaprenyl-pyrophosphoryl-MurNAc-pentapeptide, known as lipid I. This is Phospho-N-acetylmuramoyl-pentapeptide-transferase from Bacillus licheniformis (strain ATCC 14580 / DSM 13 / JCM 2505 / CCUG 7422 / NBRC 12200 / NCIMB 9375 / NCTC 10341 / NRRL NRS-1264 / Gibson 46).